The primary structure comprises 401 residues: Cysteine desulfurase (401 aa).

Pyridoxal 5'-phosphate contacts are provided by residues 72 to 73, Asn-151, Gln-179, and 199 to 201; these read AT and SAH. Lys-202 bears the N6-(pyridoxal phosphate)lysine mark. Pyridoxal 5'-phosphate is bound at residue Thr-237. Cys-324 (cysteine persulfide intermediate) is an active-site residue. Cys-324 contributes to the [2Fe-2S] cluster binding site.

It belongs to the class-V pyridoxal-phosphate-dependent aminotransferase family. NifS/IscS subfamily. Homodimer. Pyridoxal 5'-phosphate is required as a cofactor.

It catalyses the reaction (sulfur carrier)-H + L-cysteine = (sulfur carrier)-SH + L-alanine. Functionally, catalyzes the removal of elemental sulfur atoms from cysteine to produce alanine. Seems to participate in the biosynthesis of the nitrogenase metalloclusters by providing the inorganic sulfur required for the Fe-S core formation. This chain is Cysteine desulfurase, found in Enterobacter agglomerans (Erwinia herbicola).